The following is a 130-amino-acid chain: Small ribosomal subunit protein uS8 (130 aa).

Belongs to the universal ribosomal protein uS8 family. Part of the 30S ribosomal subunit.

One of the primary rRNA binding proteins, it binds directly to 16S rRNA central domain where it helps coordinate assembly of the platform of the 30S subunit. The chain is Small ribosomal subunit protein uS8 from Methanoregula boonei (strain DSM 21154 / JCM 14090 / 6A8).